A 589-amino-acid chain; its full sequence is Serine/threonine-protein phosphatase 2A 65 kDa regulatory subunit A alpha isoform (589 aa).

Residue alanine 2 is modified to N-acetylalanine. 15 HEAT repeats span residues 8 to 46 (DSLYPIAVLIDELRNEDVQLRLNSIKKLSTIALALGVER), 47 to 84 (TRSELLPFLTDTIYDEDEVLLALAEQLGTFTTLVGGPE), 85 to 123 (YVHCLLPPLESLATVEETVVRDKAVESLRAISHEHSPSD), 124 to 161 (LEAHFVPLVKRLAGGDWFTSRTSACGLFSVCYPRVSSA), 162 to 200 (VKAELRQYFRNLCSDDTPMVRRAAASKLGEFAKVLELDN), 201 to 239 (VKSEIIPMFSNLASDEQDSVRLLAVEACVNIAQLLPQED), 240 to 278 (LEALVMPTLRQAAEDKSWRVRYMVADKFTELQKAVGPEI), 279 to 321 (TKTD…RENV), 322 to 360 (IMTQILPCIKELVSDANQHVKSALASVIMGLSPILGKDN), 361 to 399 (TIEHLLPLFLAQLKDECPEVRLNIISNLDCVNEVIGIRQ), 400 to 438 (LSQSLLPAIVELAEDAKWRVRLAIIEYMPLLAGQLGVEF), 439 to 477 (FDEKLNSLCMAWLVDHVYAIREAATSNLKKLVEKFGKEW), 478 to 516 (AHATIIPKVLAMSGDPNYLHRMTTLFCINVLSEVCGQDI), 517 to 555 (TTKHMLPTVLRMAGDPVANVRFNVAKSLQKIGPILDNST), and 556 to 589 (LQSEVKPILEKLTQDQDVDVKYFAQEALTVLSLA). An N6-acetyllysine modification is found at lysine 280.

Belongs to the phosphatase 2A regulatory subunit A family. As to quaternary structure, PP2A consists of a common heterodimeric core enzyme, composed of PPP2CA a 36 kDa catalytic subunit (subunit C) and PPP2R1A a 65 kDa constant regulatory subunit (PR65 or subunit A), that associates with a variety of regulatory subunits. Proteins that associate with the core dimer include three families of regulatory subunits B (the R2/B/PR55/B55, R3/B''/PR72/PR130/PR59 and R5/B'/B56 families), the 48 kDa variable regulatory subunit, viral proteins, and cell signaling molecules. Found in a complex with at least ARL2, PPP2CB, PPP2R1A, PPP2R2A, PPP2R5E and TBCD. Interacts with the PP2A C catalytic subunit PPP2CA. Interacts with the PP2A B subunit PPP2R2A. Interacts with the PP2A B subunit PPP2R5D. Interacts with FOXO1; the interaction dephosphorylates FOXO1 on AKT-mediated phosphorylation sites. Interacts with IPO9. Interacts with TP53 and SGO1. Interacts with PLA2G16; this interaction might decrease PP2A activity. Interacts with CTTNBP2NL. Interacts with GNA12; the interaction promotes protein phosphatase 2A activation causing dephosphorylation of MAPT. Interacts with CIP2A; this interaction stabilizes CIP2A. Interacts with PABIR1/FAM122A. Interacts with ADCY8; antagonizes interaction between ADCY8 and calmodulin. Interacts with CRTC3 (when phosphorylated at 'Ser-391'). Interacts with SPRY2. Part of the core of STRIPAK complexes composed of PP2A catalytic and scaffolding subunits, the striatins (PP2A regulatory subunits), the striatin-associated proteins MOB4, STRIP1 and STRIP2, PDCD10 and members of the STE20 kinases, such as STK24 and STK26. Component of the Integrator-PP2A (INTAC) complex, composed of the Integrator core complex and protein phosphatase 2A subunits PPP2CA and PPP2R1A.

It is found in the cytoplasm. Its subcellular location is the nucleus. The protein resides in the chromosome. It localises to the centromere. The protein localises to the lateral cell membrane. It is found in the cell projection. Its subcellular location is the dendrite. In terms of biological role, the PR65 subunit of protein phosphatase 2A serves as a scaffolding molecule to coordinate the assembly of the catalytic subunit and a variable regulatory B subunit. Upon interaction with GNA12 promotes dephosphorylation of microtubule associated protein TAU/MAPT. Required for proper chromosome segregation and for centromeric localization of SGO1 in mitosis. Together with RACK1 adapter, mediates dephosphorylation of AKT1 at 'Ser-473', preventing AKT1 activation and AKT-mTOR signaling pathway. Dephosphorylation of AKT1 is essential for regulatory T-cells (Treg) homeostasis and stability. Part of the striatin-interacting phosphatase and kinase (STRIPAK) complexes. STRIPAK complexes have critical roles in protein (de)phosphorylation and are regulators of multiple signaling pathways including Hippo, MAPK, nuclear receptor and cytoskeleton remodeling. Different types of STRIPAK complexes are involved in a variety of biological processes such as cell growth, differentiation, apoptosis, metabolism and immune regulation. Key mediator of a quality checkpoint during transcription elongation as part of the Integrator-PP2A (INTAC) complex. The INTAC complex drives premature transcription termination of transcripts that are unfavorably configured for transcriptional elongation: within the INTAC complex, acts as a scaffolding subunit for PPP2CA, which catalyzes dephosphorylation of the C-terminal domain (CTD) of Pol II subunit POLR2A/RPB1 and SUPT5H/SPT5, thereby preventing transcriptional elongation. Regulates the recruitment of the SKA complex to kinetochores. In Mus musculus (Mouse), this protein is Serine/threonine-protein phosphatase 2A 65 kDa regulatory subunit A alpha isoform (Ppp2r1a).